The chain runs to 495 residues: Glutamate--tRNA ligase 1 (495 aa).

Residues 10–20 carry the 'HIGH' region motif; it reads PSPTGALHMGG. Residues 251-255 carry the 'KMSKS' region motif; that stretch reads KLSKR. Lys254 contacts ATP.

Belongs to the class-I aminoacyl-tRNA synthetase family. Glutamate--tRNA ligase type 1 subfamily. Monomer.

It localises to the cytoplasm. The enzyme catalyses tRNA(Glu) + L-glutamate + ATP = L-glutamyl-tRNA(Glu) + AMP + diphosphate. Catalyzes the attachment of glutamate to tRNA(Glu) in a two-step reaction: glutamate is first activated by ATP to form Glu-AMP and then transferred to the acceptor end of tRNA(Glu). The sequence is that of Glutamate--tRNA ligase 1 from Syntrophomonas wolfei subsp. wolfei (strain DSM 2245B / Goettingen).